Here is a 365-residue protein sequence, read N- to C-terminus: Protein RecA (365 aa).

Residue G81 to T88 coordinates ATP.

Belongs to the RecA family.

It localises to the cytoplasm. Can catalyze the hydrolysis of ATP in the presence of single-stranded DNA, the ATP-dependent uptake of single-stranded DNA by duplex DNA, and the ATP-dependent hybridization of homologous single-stranded DNAs. It interacts with LexA causing its activation and leading to its autocatalytic cleavage. The chain is Protein RecA from Borreliella burgdorferi (strain ATCC 35210 / DSM 4680 / CIP 102532 / B31) (Borrelia burgdorferi).